Consider the following 173-residue polypeptide: Probable transcription termination protein NusA (173 aa).

The KH domain occupies 31 to 97 (DEKIVFVVKE…EDVWVKKFGN (67 aa)). Residues 147–162 (ADNRPKKDEIPEKAAE) show a composition bias toward basic and acidic residues. The interval 147 to 173 (ADNRPKKDEIPEKAAESSENVQAEENQ) is disordered. The segment covering 163-173 (SSENVQAEENQ) has biased composition (polar residues).

This sequence belongs to the NusA family.

The protein localises to the cytoplasm. Its function is as follows. Participates in transcription termination. The protein is Probable transcription termination protein NusA of Methanococcus vannielii (strain ATCC 35089 / DSM 1224 / JCM 13029 / OCM 148 / SB).